We begin with the raw amino-acid sequence, 477 residues long: Glycogen synthase (477 aa).

Residue Lys15 participates in ADP-alpha-D-glucose binding.

Belongs to the glycosyltransferase 1 family. Bacterial/plant glycogen synthase subfamily.

The catalysed reaction is [(1-&gt;4)-alpha-D-glucosyl](n) + ADP-alpha-D-glucose = [(1-&gt;4)-alpha-D-glucosyl](n+1) + ADP + H(+). Its pathway is glycan biosynthesis; glycogen biosynthesis. Synthesizes alpha-1,4-glucan chains using ADP-glucose. This chain is Glycogen synthase, found in Edwardsiella ictaluri (strain 93-146).